The sequence spans 160 residues: Nucleotide-binding protein ASA_3207 (160 aa).

Belongs to the YajQ family.

Its function is as follows. Nucleotide-binding protein. The polypeptide is Nucleotide-binding protein ASA_3207 (Aeromonas salmonicida (strain A449)).